The following is a 410-amino-acid chain: Probable peptidoglycan glycosyltransferase FtsW (410 aa).

Over 1-37 (MRSEERQLNLFGTSVNWSWPNLFKEREAPGMQLYDRA) the chain is Cytoplasmic. Residues 38-58 (LLFAVLSLICFGFVMVMSASM) form a helical membrane-spanning segment. Over 59 to 69 (PEAQSLTGNPY) the chain is Periplasmic. The helical transmembrane segment at 70 to 90 (HFAIRHFAYLVGCAVIAAVVL) threads the bilayer. Residues 91-99 (RIEMSRWQQ) lie on the Cytoplasmic side of the membrane. The helical transmembrane segment at 100–120 (FSPLLLLIVGIMLVAVLLVGT) threads the bilayer. The Periplasmic portion of the chain corresponds to 121–131 (SVNGATRWLSV). The chain crosses the membrane as a helical span at residues 132–154 (GPIRIQVAELAKFAFTIYMAGYL). The Cytoplasmic segment spans residues 155-163 (VRRHQEIRE). The helical transmembrane segment at 164-184 (NAKGFYKPIAVFAVYAFLILM) threads the bilayer. Residues 185–186 (QP) are Periplasmic-facing. The helical transmembrane segment at 187–207 (DLGTVVVLFVGTVGLLFLAGA) threads the bilayer. Position 208 (Arg208) is a topological domain, cytoplasmic. Residues 209–229 (LLDFFALILTGVMAFVALVLL) form a helical membrane-spanning segment. The Periplasmic portion of the chain corresponds to 230–291 (EPYRMRRVTS…PEAHTDFIFA (62 aa)). Residues 292–312 (VIGEELGFIGIVVVLSVLLFV) form a helical membrane-spanning segment. Topologically, residues 313-336 (ALRAIKLGNLCIEIDKPFEGYLAY) are cytoplasmic. Residues 337–357 (AIGIWFCFQTVVNVGASIGML) traverse the membrane as a helical segment. The Periplasmic segment spans residues 358-364 (PTKGLTL). The chain crosses the membrane as a helical span at residues 365–385 (PFISYGGSSLWVMTAAAMILI). Residues 386–410 (RIDHERRLSSIQAVQGKKVNDNREY) lie on the Cytoplasmic side of the membrane.

The protein belongs to the SEDS family. FtsW subfamily.

It is found in the cell inner membrane. The catalysed reaction is [GlcNAc-(1-&gt;4)-Mur2Ac(oyl-L-Ala-gamma-D-Glu-L-Lys-D-Ala-D-Ala)](n)-di-trans,octa-cis-undecaprenyl diphosphate + beta-D-GlcNAc-(1-&gt;4)-Mur2Ac(oyl-L-Ala-gamma-D-Glu-L-Lys-D-Ala-D-Ala)-di-trans,octa-cis-undecaprenyl diphosphate = [GlcNAc-(1-&gt;4)-Mur2Ac(oyl-L-Ala-gamma-D-Glu-L-Lys-D-Ala-D-Ala)](n+1)-di-trans,octa-cis-undecaprenyl diphosphate + di-trans,octa-cis-undecaprenyl diphosphate + H(+). It participates in cell wall biogenesis; peptidoglycan biosynthesis. Functionally, peptidoglycan polymerase that is essential for cell division. This is Probable peptidoglycan glycosyltransferase FtsW from Shewanella sediminis (strain HAW-EB3).